Here is a 213-residue protein sequence, read N- to C-terminus: Orotate phosphoribosyltransferase (213 aa).

Lysine 26 contributes to the 5-phospho-alpha-D-ribose 1-diphosphate binding site. 34 to 35 (FF) contributes to the orotate binding site. 5-phospho-alpha-D-ribose 1-diphosphate is bound by residues 72-73 (YK), arginine 99, lysine 100, lysine 103, histidine 105, and 124-132 (DDVITAGTA). 2 residues coordinate orotate: threonine 128 and arginine 156.

This sequence belongs to the purine/pyrimidine phosphoribosyltransferase family. PyrE subfamily. Homodimer. The cofactor is Mg(2+).

It carries out the reaction orotidine 5'-phosphate + diphosphate = orotate + 5-phospho-alpha-D-ribose 1-diphosphate. It functions in the pathway pyrimidine metabolism; UMP biosynthesis via de novo pathway; UMP from orotate: step 1/2. Functionally, catalyzes the transfer of a ribosyl phosphate group from 5-phosphoribose 1-diphosphate to orotate, leading to the formation of orotidine monophosphate (OMP). The polypeptide is Orotate phosphoribosyltransferase (Salmonella typhi).